A 448-amino-acid chain; its full sequence is MGPPPAARRREGEPDNQDPAGLLTDKYELTMLAAALRDGSANRPTTFEVFARRLPTGRRYGVVAGTGRLLEALPQFRFDADACELLAQFLDPATVRYLREFRFRGDIDGYAEGELYFPGSPVLSVRGSFAECVLLETLVLSIFNHDTAIASAAARMVSAAGGRPLIEMGSRRTHERAAVAAARAAYIAGFAASSNLAAQRRYGVPAHGTAAHAFTMLHAQHGGPTELAERAAFRAQVEALGPGTTLLVDTYDVTTGVANAVAAAGAELGAIRIDSGELGVLARQAREQLDRLGATRTRIVVSGDLDEFSIAALRGEPVDSYGVGTSLVTGSGAPTANMVYKLVEVDGVPVQKRSSYKESPGGRKEALRRSRATGTITEELVHPAGRPPVIVEPHRVLTLPLVRAGQPVADTSLAAARQLVASGLRSLPADGLKLAPGEPAIPTRTIPA.

The tract at residues 1–21 (MGPPPAARRREGEPDNQDPAG) is disordered. Histidine 212 carries the phosphohistidine modification. The tract at residues 353 to 372 (RSSYKESPGGRKEALRRSRA) is disordered.

Belongs to the NAPRTase family. Transiently phosphorylated on a His residue during the reaction cycle. Phosphorylation strongly increases the affinity for substrates and increases the rate of nicotinate D-ribonucleotide production. Dephosphorylation regenerates the low-affinity form of the enzyme, leading to product release.

It carries out the reaction nicotinate + 5-phospho-alpha-D-ribose 1-diphosphate + ATP + H2O = nicotinate beta-D-ribonucleotide + ADP + phosphate + diphosphate. It functions in the pathway cofactor biosynthesis; NAD(+) biosynthesis; nicotinate D-ribonucleotide from nicotinate: step 1/1. In terms of biological role, involved in the Preiss-Handler pathway, which is a recycling route that permits the salvage of free nicotinamide (NM) and nicotinic acid (Na) involved in the NAD biosynthesis. Catalyzes the synthesis of beta-nicotinate D-ribonucleotide from nicotinate and 5-phospho-D-ribose 1-phosphate at the expense of ATP. It is not able to use nicotinamide. PncB1 contributes to basal NAD level. The sequence is that of Nicotinate phosphoribosyltransferase pncB1 (pncB1) from Mycobacterium tuberculosis (strain CDC 1551 / Oshkosh).